The primary structure comprises 399 residues: MSILYIDEIKDLREKLVFIRVDFNVPQDDNGNITEDTRIVGAVPTIKYAIENGAKVILASHLGRPKGEKKPKYTMAPAARRLSELLGKEVKQATDCFGPDVDAMVAALQPGDVLMLENVRFYPGEEKNDPDFACKLANGCEIYVNDAFAVSHRAHASVHAITKCIPVIAAGFLMKNEMTFFEKAMTRPVRPLAAILGGAKVSGKLEVLETLVGKVDIIIIGGGMAFTFLKARGLSVGKSLVEDDLIDTAKRILDNAAKRGIEFLLPEDCVVADRFAADADCKTVSVNDIPSEWMALDVGPASTARFSDALKEANTVIWNGPMGVFEMDRFAKGTFAIADVVAGLKNATTIIGGGDTDSAVRKAGVADKVSYISTGGGAFLELLEGKKLPGVEVLEQSGK.

Substrate-binding positions include 22–24 (DFN), R38, 61–64 (HLGR), R120, and R153. Residues K204, E326, and 353–356 (GGDT) contribute to the ATP site.

It belongs to the phosphoglycerate kinase family. Monomer.

The protein localises to the cytoplasm. It catalyses the reaction (2R)-3-phosphoglycerate + ATP = (2R)-3-phospho-glyceroyl phosphate + ADP. Its pathway is carbohydrate degradation; glycolysis; pyruvate from D-glyceraldehyde 3-phosphate: step 2/5. This is Phosphoglycerate kinase from Geotalea daltonii (strain DSM 22248 / JCM 15807 / FRC-32) (Geobacter daltonii).